Here is a 559-residue protein sequence, read N- to C-terminus: Nicotinate phosphoribosyltransferase 1 (559 aa).

2 residues coordinate nicotinate: tyrosine 33 and threonine 221. Histidine 224 is subject to Phosphohistidine. Arginine 331 is a binding site for nicotinate. Residue threonine 393 participates in 5-phospho-alpha-D-ribose 1-diphosphate binding.

Belongs to the NAPRTase family. Mg(2+) serves as cofactor. Requires Mn(2+) as cofactor. Post-translationally, transiently phosphorylated on a His residue during the reaction cycle. Phosphorylation strongly increases the affinity for substrates and increases the rate of nicotinate D-ribonucleotide production. Dephosphorylation regenerates the low-affinity form of the enzyme, leading to product release.

It carries out the reaction nicotinate + 5-phospho-alpha-D-ribose 1-diphosphate + ATP + H2O = nicotinate beta-D-ribonucleotide + ADP + phosphate + diphosphate. It functions in the pathway cofactor biosynthesis; NAD(+) biosynthesis; nicotinate D-ribonucleotide from nicotinate: step 1/1. Functionally, catalyzes the first step in the biosynthesis of NAD from nicotinic acid, the ATP-dependent synthesis of beta-nicotinate D-ribonucleotide from nicotinate and 5-phospho-D-ribose 1-phosphate. Helps prevent cellular oxidative stress via its role in NAD biosynthesis. The polypeptide is Nicotinate phosphoribosyltransferase 1 (Arabidopsis thaliana (Mouse-ear cress)).